A 204-amino-acid chain; its full sequence is Thymidylate kinase (204 aa).

13–20 (GIDGSGKS) is a binding site for ATP.

It belongs to the thymidylate kinase family.

The catalysed reaction is dTMP + ATP = dTDP + ADP. Phosphorylation of dTMP to form dTDP in both de novo and salvage pathways of dTTP synthesis. This is Thymidylate kinase from Leptospira interrogans serogroup Icterohaemorrhagiae serovar copenhageni (strain Fiocruz L1-130).